Consider the following 175-residue polypeptide: ADP-ribosylation factor 6 (175 aa).

Gly2 carries the N-myristoyl glycine lipid modification. The N6-myristoyl lysine moiety is linked to residue Lys3. GTP-binding positions include 23–28 (AAGKTT), 41–44 (TIPT), 63–67 (DVGGQ), 122–125 (NKQD), and 155–156 (CA).

It belongs to the small GTPase superfamily. Arf family.

The protein resides in the cytoplasm. It is found in the cytosol. The protein localises to the cell membrane. Its subcellular location is the endosome membrane. It localises to the recycling endosome membrane. The protein resides in the cell projection. It is found in the filopodium membrane. The protein localises to the ruffle. Its subcellular location is the cleavage furrow. It localises to the midbody. The protein resides in the midbody ring. It is found in the golgi apparatus. The catalysed reaction is GTP + H2O = GDP + phosphate + H(+). Functionally, GTP-binding protein involved in protein trafficking; regulates endocytic recycling and cytoskeleton remodeling. May modulate vesicle budding and uncoating within the Golgi apparatus. May contribute to the regulation of dendritic branching, filopodia extension and dendritic spine development. The polypeptide is ADP-ribosylation factor 6 (arf6) (Xenopus laevis (African clawed frog)).